Consider the following 137-residue polypeptide: Holo-[acyl-carrier-protein] synthase (137 aa).

Residues D8 and E57 each contribute to the Mg(2+) site.

This sequence belongs to the P-Pant transferase superfamily. AcpS family. Mg(2+) serves as cofactor.

Its subcellular location is the cytoplasm. It carries out the reaction apo-[ACP] + CoA = holo-[ACP] + adenosine 3',5'-bisphosphate + H(+). Functionally, transfers the 4'-phosphopantetheine moiety from coenzyme A to a Ser of acyl-carrier-protein. The polypeptide is Holo-[acyl-carrier-protein] synthase (Cereibacter sphaeroides (strain ATCC 17025 / ATH 2.4.3) (Rhodobacter sphaeroides)).